The following is a 351-amino-acid chain: Minor outer capsid protein P9 (351 aa).

The segment at 246 to 330 (GVPAALPQPD…EMDMPDGFHD (85 aa)) is disordered. Residues 285–298 (MIRKKVETSKDAPS) show a composition bias toward basic and acidic residues. Residues 315–324 (LEDDMSEMDM) show a composition bias toward acidic residues.

The protein belongs to the phytoreovirus minor outer capsid protein P9 family.

The protein resides in the virion. It is found in the host cytoplasm. Minor outer capsid protein. In Alopecurus aequalis (Barnyard grass), this protein is Minor outer capsid protein P9.